Consider the following 467-residue polypeptide: Phosphomethylpyrimidine synthase (467 aa).

Substrate-binding positions include Asn80, Met109, Tyr139, His175, 195-197 (SRG), 236-239 (DSLR), and Glu275. His279 provides a ligand contact to Zn(2+). Tyr302 is a substrate binding site. Residue His343 coordinates Zn(2+). The [4Fe-4S] cluster site is built by Cys423, Cys426, and Cys431.

It belongs to the ThiC family. It depends on [4Fe-4S] cluster as a cofactor.

The enzyme catalyses 5-amino-1-(5-phospho-beta-D-ribosyl)imidazole + S-adenosyl-L-methionine = 4-amino-2-methyl-5-(phosphooxymethyl)pyrimidine + CO + 5'-deoxyadenosine + formate + L-methionine + 3 H(+). Its pathway is cofactor biosynthesis; thiamine diphosphate biosynthesis. Its function is as follows. Catalyzes the synthesis of the hydroxymethylpyrimidine phosphate (HMP-P) moiety of thiamine from aminoimidazole ribotide (AIR) in a radical S-adenosyl-L-methionine (SAM)-dependent reaction. This is Phosphomethylpyrimidine synthase from Synechococcus sp. (strain WH7803).